We begin with the raw amino-acid sequence, 122 residues long: Large ribosomal subunit protein uL14 (122 aa).

In terms of assembly, forms a cluster with proteins L3 and L19. In the 70S ribosome, L14 and L19 interact and together make contacts with the 16S rRNA in bridges B5 and B8. Part of the 50S ribosomal subunit.

Functionally, binds to 23S rRNA. Forms part of two intersubunit bridges in the 70S ribosome. The protein is Large ribosomal subunit protein uL14 of Rhodopseudomonas palustris (strain ATCC BAA-98 / CGA009).